A 244-amino-acid chain; its full sequence is Lectin (244 aa).

Positions 1–20 (TETETTSFSIPKTDQPSSPK) are disordered.

Belongs to the leguminous lectin family. In terms of assembly, homodimer. In contrast to other Lathyrus lectins which are tetramer of two alpha and two beta chains.

This chain is Lectin, found in Lathyrus sphaericus (Spring vetchling).